A 134-amino-acid polypeptide reads, in one-letter code: Small ribosomal subunit protein uS8 (134 aa).

It belongs to the universal ribosomal protein uS8 family. As to quaternary structure, part of the 30S ribosomal subunit. Contacts proteins S5 and S12.

In terms of biological role, one of the primary rRNA binding proteins, it binds directly to 16S rRNA central domain where it helps coordinate assembly of the platform of the 30S subunit. The chain is Small ribosomal subunit protein uS8 from Petrotoga mobilis (strain DSM 10674 / SJ95).